The sequence spans 508 residues: Cyclic AMP-responsive element-binding protein 5 (508 aa).

Residues 16-40 (FVCSAPGCSQRFPTEDHLMIHRHKH) form a C2H2-type zinc finger. Residue Lys-50 forms a Glycyl lysine isopeptide (Lys-Gly) (interchain with G-Cter in SUMO2) linkage. Residues Thr-59 and Thr-61 each carry the phosphothreonine modification. The residue at position 137 (Ser-137) is a Phosphoserine. Positions 265–391 (RQDQTPHHHM…LERNRAAATR (127 aa)) are disordered. Basic residues-rich tracts occupy residues 271 to 280 (HHHMHSHPHQ) and 289 to 326 (PYPHQHQHPAHHPHPQPHHQQNHPHHHSHSHLHAHPAH). The span at 337–346 (TGNQAQVSPA) shows a compositional bias: polar residues. The span at 347–357 (TQQMQPTQTIQ) shows a compositional bias: low complexity. A compositionally biased stretch (basic and acidic residues) spans 369 to 386 (VVDEDPDERRRKFLERNR). The region spanning 375 to 438 (DERRRKFLER…AQLKQLLLTH (64 aa)) is the bZIP domain. A basic motif region spans residues 377 to 397 (RRRKFLERNRAAATRCRQKRK). Positions 403 to 431 (LEKKAEELTQTNMQLQNEVSMLKNEVAQL) are leucine-zipper. The segment at 449–468 (ESQGYLSPESSPPASPVPAC) is disordered.

It belongs to the bZIP family. As to quaternary structure, binds DNA as a homodimer or as a heterodimer with JUN or ATF2/CREBP1.

Its subcellular location is the nucleus. Its function is as follows. Binds to the cAMP response element and activates transcription. The sequence is that of Cyclic AMP-responsive element-binding protein 5 (CREB5) from Homo sapiens (Human).